The following is a 383-amino-acid chain: S-adenosylmethionine synthase (383 aa).

Histidine 15 contributes to the ATP binding site. Residue aspartate 17 participates in Mg(2+) binding. Glutamate 43 is a K(+) binding site. 2 residues coordinate L-methionine: glutamate 56 and glutamine 99. The tract at residues 99 to 109 (QSPDINQGVDR) is flexible loop. Residues 164–166 (DAK), 230–231 (RF), aspartate 239, 245–246 (RK), alanine 262, and lysine 266 each bind ATP. Aspartate 239 contributes to the L-methionine binding site. Lysine 270 is a binding site for L-methionine.

Belongs to the AdoMet synthase family. In terms of assembly, homotetramer; dimer of dimers. Requires Mg(2+) as cofactor. K(+) serves as cofactor.

It localises to the cytoplasm. The catalysed reaction is L-methionine + ATP + H2O = S-adenosyl-L-methionine + phosphate + diphosphate. Its pathway is amino-acid biosynthesis; S-adenosyl-L-methionine biosynthesis; S-adenosyl-L-methionine from L-methionine: step 1/1. Its function is as follows. Catalyzes the formation of S-adenosylmethionine (AdoMet) from methionine and ATP. The overall synthetic reaction is composed of two sequential steps, AdoMet formation and the subsequent tripolyphosphate hydrolysis which occurs prior to release of AdoMet from the enzyme. The chain is S-adenosylmethionine synthase from Shewanella oneidensis (strain ATCC 700550 / JCM 31522 / CIP 106686 / LMG 19005 / NCIMB 14063 / MR-1).